Here is a 54-residue protein sequence, read N- to C-terminus: Large ribosomal subunit protein bL33 (54 aa).

The protein belongs to the bacterial ribosomal protein bL33 family.

In Xylella fastidiosa (strain M23), this protein is Large ribosomal subunit protein bL33.